A 777-amino-acid chain; its full sequence is Endonuclease MutS2 (777 aa).

328–335 (GPNTGGKT) serves as a coordination point for ATP. Residues 702 to 777 (LDLRGKRYEE…GSGATIVIFK (76 aa)) form the Smr domain.

This sequence belongs to the DNA mismatch repair MutS family. MutS2 subfamily. In terms of assembly, homodimer. Binds to stalled ribosomes, contacting rRNA.

Endonuclease that is involved in the suppression of homologous recombination and thus may have a key role in the control of bacterial genetic diversity. In terms of biological role, acts as a ribosome collision sensor, splitting the ribosome into its 2 subunits. Detects stalled/collided 70S ribosomes which it binds and splits by an ATP-hydrolysis driven conformational change. Acts upstream of the ribosome quality control system (RQC), a ribosome-associated complex that mediates the extraction of incompletely synthesized nascent chains from stalled ribosomes and their subsequent degradation. Probably generates substrates for RQC. The sequence is that of Endonuclease MutS2 from Streptococcus sanguinis (strain SK36).